The following is a 114-amino-acid chain: Small ribosomal subunit protein uS15 (114 aa).

It belongs to the universal ribosomal protein uS15 family.

The chain is Small ribosomal subunit protein uS15 (RpS13) from Musca domestica (House fly).